The following is a 101-amino-acid chain: Small ribosomal subunit protein uS14 (101 aa).

The span at 1-10 (MAKNSMVERD) shows a compositional bias: basic and acidic residues. The disordered stretch occupies residues 1–20 (MAKNSMVERDRKRRKLAQKY).

It belongs to the universal ribosomal protein uS14 family. In terms of assembly, part of the 30S ribosomal subunit. Contacts proteins S3 and S10.

Binds 16S rRNA, required for the assembly of 30S particles and may also be responsible for determining the conformation of the 16S rRNA at the A site. The chain is Small ribosomal subunit protein uS14 from Halorhodospira halophila (strain DSM 244 / SL1) (Ectothiorhodospira halophila (strain DSM 244 / SL1)).